Here is a 73-residue protein sequence, read N- to C-terminus: Large ribosomal subunit protein bL31c (73 aa).

The protein belongs to the bacterial ribosomal protein bL31 family. Type A subfamily. Part of the 50S ribosomal subunit.

The protein resides in the plastid. It localises to the chloroplast. In terms of biological role, binds the 23S rRNA. The sequence is that of Large ribosomal subunit protein bL31c from Palmaria palmata (Dulse).